A 60-amino-acid polypeptide reads, in one-letter code: Putative transcriptional regulator XtpA (60 aa).

Its function is as follows. Controls the expression of small non-coding RNA GcvB, which represses the expression of many amino acid transporter proteins and uptake of aminoglycoside antibiotics in cells. Might be a transcriptional activator. An RNA (xtr) with a tRNA-like fold possibly derived from tRNA-Arg(UCG) is encoded entirely within the protein; xtr does not have the sequence corresponding to tRNA anticodon or variable arms. 10 synonymous codon changes in the xtr region of xtpA have the same phenotype as a deletion mutation, suggesting the mRNA secondary structure is important for function. In Escherichia coli (strain K12), this protein is Putative transcriptional regulator XtpA.